The sequence spans 695 residues: Serotransferrin (695 aa).

The first 19 residues, 1-19 (MRLAAGALLACAALGLCLA), serve as a signal peptide directing secretion. Transferrin-like domains are found at residues 25–347 (VRWC…NLRE) and 361–680 (VKWC…NLRK). Disulfide bonds link cysteine 28–cysteine 67 and cysteine 38–cysteine 58. Arginine 42 carries the post-translational modification Dimethylated arginine. Residues aspartate 82 and tyrosine 114 each contribute to the Fe(3+) site. 17 disulfide bridges follow: cysteine 137–cysteine 213, cysteine 156–cysteine 350, cysteine 177–cysteine 193, cysteine 180–cysteine 196, cysteine 190–cysteine 198, cysteine 246–cysteine 260, cysteine 358–cysteine 612, cysteine 364–cysteine 396, cysteine 374–cysteine 387, cysteine 421–cysteine 690, cysteine 436–cysteine 653, cysteine 468–cysteine 539, cysteine 492–cysteine 681, cysteine 502–cysteine 516, cysteine 513–cysteine 522, cysteine 579–cysteine 593, and cysteine 631–cysteine 636. Hydrogencarbonate is bound by residues threonine 139, arginine 143, alanine 145, and glycine 146. Tyrosine 207 is a Fe(3+) binding site. Histidine 268 provides a ligand contact to Fe(3+). Serine 389 is modified (phosphoserine). Residues aspartate 411 and tyrosine 444 each coordinate Fe(3+). The hydrogencarbonate site is built by threonine 470, arginine 474, alanine 476, and glycine 477. Asparagine 509 carries N-linked (GlcNAc...) asparagine glycosylation. Tyrosine 533 lines the Fe(3+) pocket. Histidine 601 serves as a coordination point for Fe(3+). Serine 682 bears the Phosphoserine mark.

This sequence belongs to the transferrin family. Monomer. Part of a complex composed of SLC40A1/ferroportin, TF/transferrin and HEPH/hephaestin that transfers iron from cells to transferrin. In terms of tissue distribution, expressed by the liver and secreted in plasma.

It localises to the secreted. In terms of biological role, transferrins are iron binding transport proteins which can bind two Fe(3+) ions in association with the binding of an anion, usually bicarbonate. It is responsible for the transport of iron from sites of absorption and heme degradation to those of storage and utilization. Serum transferrin may also have a further role in stimulating cell proliferation. The protein is Serotransferrin (TF) of Oryctolagus cuniculus (Rabbit).